We begin with the raw amino-acid sequence, 129 residues long: Histone H2A-III (129 aa).

The protein belongs to the histone H2A family. The nucleosome is a histone octamer containing two molecules each of H2A, H2B, H3 and H4 assembled in one H3-H4 heterotetramer and two H2A-H2B heterodimers. The octamer wraps approximately 147 bp of DNA.

The protein resides in the nucleus. Its subcellular location is the chromosome. Functionally, core component of nucleosome. Nucleosomes wrap and compact DNA into chromatin, limiting DNA accessibility to the cellular machineries which require DNA as a template. Histones thereby play a central role in transcription regulation, DNA repair, DNA replication and chromosomal stability. DNA accessibility is regulated via a complex set of post-translational modifications of histones, also called histone code, and nucleosome remodeling. The polypeptide is Histone H2A-III (Volvox carteri (Green alga)).